Reading from the N-terminus, the 513-residue chain is ATP synthase subunit alpha 1 (513 aa).

169-176 contacts ATP; sequence GDRQTGKT.

Belongs to the ATPase alpha/beta chains family. As to quaternary structure, F-type ATPases have 2 components, CF(1) - the catalytic core - and CF(0) - the membrane proton channel. CF(1) has five subunits: alpha(3), beta(3), gamma(1), delta(1), epsilon(1). CF(0) has three main subunits: a(1), b(2) and c(9-12). The alpha and beta chains form an alternating ring which encloses part of the gamma chain. CF(1) is attached to CF(0) by a central stalk formed by the gamma and epsilon chains, while a peripheral stalk is formed by the delta and b chains.

It is found in the cell inner membrane. It catalyses the reaction ATP + H2O + 4 H(+)(in) = ADP + phosphate + 5 H(+)(out). In terms of biological role, produces ATP from ADP in the presence of a proton gradient across the membrane. The alpha chain is a regulatory subunit. In Vibrio campbellii (strain ATCC BAA-1116), this protein is ATP synthase subunit alpha 1.